We begin with the raw amino-acid sequence, 557 residues long: Ribonuclease J 2 (557 aa).

Zn(2+) is bound by residues H76, H78, H144, and E166. Residue 366 to 370 (HASSH) participates in substrate binding.

It belongs to the metallo-beta-lactamase superfamily. RNA-metabolizing metallo-beta-lactamase-like family. Bacterial RNase J subfamily. Homodimer. Component of a possible RNA degradosome complex composed of cshA, eno, pfkA, pnp, rnjA, rnjB, rnpA and rny. Interacts specifically with RNase J1. Zn(2+) is required as a cofactor.

The protein localises to the cytoplasm. In terms of biological role, an RNase that has 5'-3' exonuclease and endonuclease activity, with the exonuclease activity probably being most important in vivo. Involved in maturation of 16S rRNA, rnpB (the RNA component of RNase P) maturation and degradation, and mRNA maturation and/or decay. This subunit probably plays a structural rather than enzymatic role as mutation of its putative active site gives no phenotype, and its deletion is partially complemented by inactive RNase J1. The protein is Ribonuclease J 2 of Staphylococcus aureus (strain NCTC 8325 / PS 47).